A 412-amino-acid polypeptide reads, in one-letter code: Tyrosine--tRNA ligase (412 aa).

Tyr-31 is an L-tyrosine binding site. The 'HIGH' region signature appears at 36–45 (PTAPSLHIGH). The L-tyrosine site is built by Tyr-162 and Gln-166. The 'KMSKS' region signature appears at 222–226 (KIGKT). ATP is bound at residue Lys-225. In terms of domain architecture, S4 RNA-binding spans 345–411 (KRWLDIVVEL…GKRKKQVIDL (67 aa)).

It belongs to the class-I aminoacyl-tRNA synthetase family. TyrS type 1 subfamily. Homodimer.

The protein resides in the cytoplasm. The enzyme catalyses tRNA(Tyr) + L-tyrosine + ATP = L-tyrosyl-tRNA(Tyr) + AMP + diphosphate + H(+). Functionally, catalyzes the attachment of tyrosine to tRNA(Tyr) in a two-step reaction: tyrosine is first activated by ATP to form Tyr-AMP and then transferred to the acceptor end of tRNA(Tyr). The protein is Tyrosine--tRNA ligase of Chlamydia trachomatis serovar L2 (strain ATCC VR-902B / DSM 19102 / 434/Bu).